The primary structure comprises 347 residues: Tetraacyldisaccharide 4'-kinase (347 aa).

64–71 (YVGGTGKT) contacts ATP.

The protein belongs to the LpxK family.

The catalysed reaction is a lipid A disaccharide + ATP = a lipid IVA + ADP + H(+). Its pathway is glycolipid biosynthesis; lipid IV(A) biosynthesis; lipid IV(A) from (3R)-3-hydroxytetradecanoyl-[acyl-carrier-protein] and UDP-N-acetyl-alpha-D-glucosamine: step 6/6. Its function is as follows. Transfers the gamma-phosphate of ATP to the 4'-position of a tetraacyldisaccharide 1-phosphate intermediate (termed DS-1-P) to form tetraacyldisaccharide 1,4'-bis-phosphate (lipid IVA). In Bordetella bronchiseptica (strain ATCC BAA-588 / NCTC 13252 / RB50) (Alcaligenes bronchisepticus), this protein is Tetraacyldisaccharide 4'-kinase.